The primary structure comprises 658 residues: MDRGTLPLAVALLLASCSLSPTSLAETVHCDLQPVGPERGEVTYTTSQVSKGCVAQAPNAILEVHVLFLEFPTGPSQLELTLQASKQNGTWPREVLLVLSVNSSVFLHLQALGIPLHLAYNSSLVTFQEPPGVNTTELPSFPKTQILEWAAERGPITSAAELNDPQSILLRLGQAQGSLSFCMLEASQDMGRTLEWRPRTPALVRGCHLEGVAGHKEAHILRVLPGHSAGPRTVTVKVELSCAPGDLDAVLILQGPPYVSWLIDANHNMQIWTTGEYSFKIFPEKNIRGFKLPDTPQGLLGEARMLNASIVASFVELPLASIVSLHASSCGGRLQTSPAPIQTTPPKDTCSPELLMSLIQTKCADDAMTLVLKKELVAHLKCTITGLTFWDPSCEAEDRGDKFVLRSAYSSCGMQVSASMISNEAVVNILSSSSPQRKKVHCLNMDSLSFQLGLYLSPHFLQASNTIEPGQQSFVQVRVSPSVSEFLLQLDSCHLDLGPEGGTVELIQGRAAKGNCVSLLSPSPEGDPRFSFLLHFYTVPIPKTGTLSCTVALRPKTGSQDQEVHRTVFMRLNIISPDLSGCTSKGLVLPAVLGITFGAFLIGALLTAALWYIYSHTRSPSKREPVVAVAAPASSESSSTNHSIGSTQSTPCSTSSMA.

The signal sequence occupies residues 1–25 (MDRGTLPLAVALLLASCSLSPTSLA). The segment at 26–46 (ETVHCDLQPVGPERGEVTYTT) is OR1, N-terminal part. The required for interaction with GDF2 stretch occupies residues 26-337 (ETVHCDLQPV…SSCGGRLQTS (312 aa)). At 26 to 586 (ETVHCDLQPV…PDLSGCTSKG (561 aa)) the chain is on the extracellular side. 7 disulfide bridges follow: Cys-30/Cys-207, Cys-53/Cys-182, Cys-242/Cys-330, Cys-350/Cys-382, Cys-363/Cys-442, Cys-394/Cys-412, and Cys-493/Cys-549. The tract at residues 47–199 (SQVSKGCVAQ…MGRTLEWRPR (153 aa)) is OR2. Residues Asn-88, Asn-102, Asn-121, and Asn-134 are each glycosylated (N-linked (GlcNAc...) asparagine). An OR1, C-terminal part region spans residues 200-330 (TPALVRGCHL…SIVSLHASSC (131 aa)). Positions 270–282 (QIWTTGEYSFKIF) are essential for interaction with GDF2. N-linked (GlcNAc...) asparagine glycosylation is present at Asn-307. Positions 363–533 (CADDAMTLVL…PEGDPRFSFL (171 aa)) constitute a ZP domain. Residues 399-401 (RGD) carry the Cell attachment site motif. Residues 587 to 611 (LVLPAVLGITFGAFLIGALLTAALW) form a helical membrane-spanning segment. Residues 612-658 (YIYSHTRSPSKREPVVAVAAPASSESSSTNHSIGSTQSTPCSTSSMA) are Cytoplasmic-facing. Over residues 626 to 639 (VVAVAAPASSESSS) the composition is skewed to low complexity. The disordered stretch occupies residues 626 to 658 (VVAVAAPASSESSSTNHSIGSTQSTPCSTSSMA). Residues 640–658 (TNHSIGSTQSTPCSTSSMA) are compositionally biased toward polar residues. A phosphoserine; by TGFBR1 mark is found at Ser-646 and Ser-649.

Homodimer; disulfide-linked. Forms a heteromeric complex with the signaling receptors for transforming growth factor-beta: TGFBR1 and/or TGFBR2. It is able to bind TGFB1 and TGFB2 with high affinity, but not TGFB3. Interacts with GDF2, forming a heterotetramer with a 2:2 stoichiometry. Interacts with ACVRL1. Can form a heteromeric complex with GDF2 and ACVRL1. Interacts with BMP10. Interacts with DYNLT4. Interacts with ARRB2. Detected on umbilical veil endothelial cells. Detected in placenta (at protein level). Detected on endothelial cells.

Its subcellular location is the cell membrane. Functionally, vascular endothelium glycoprotein that plays an important role in the regulation of angiogenesis. Required for normal structure and integrity of adult vasculature. Regulates the migration of vascular endothelial cells. Required for normal extraembryonic angiogenesis and for embryonic heart development. May regulate endothelial cell shape changes in response to blood flow, which drive vascular remodeling and establishment of normal vascular morphology during angiogenesis. May play a critical role in the binding of endothelial cells to integrins and/or other RGD receptors. Acts as a TGF-beta coreceptor and is involved in the TGF-beta/BMP signaling cascade that ultimately leads to the activation of SMAD transcription factors. Required for GDF2/BMP9 signaling through SMAD1 in endothelial cells and modulates TGFB1 signaling through SMAD3. This chain is Endoglin (ENG), found in Homo sapiens (Human).